The primary structure comprises 1582 residues: MSSLDPSLSTTPSTNRRGTFSKAKSFRRAALNLEPQGTPGQPHAFRFLSGEEYSGPDIIENIKKPININIESEEYKTPLFLGANGTLYNKYYIPIKIIGIDEPLPQTGLSPSLSSSSSSSSSPSPPTTTSTTPPPPNNNNNSKQIKKNNSISDLTPYLNFNSTDQIYTSFPESMAFDDYMDYEESLVEWKRQVEQNLGIIQLPHSIGRTYPRPKVIHEQLFRKNSEASNDDSISYDIERKLTDSDIKETNSSVNDDGESFSHSPTLRGNNGSSLSVGGGGDNHDNTSNKDNASSQGTNHGVTLNHPNSGINLRERSNSDTSTGSFEGTQLDGSSPMDGSPSTGSLAGFVANGTRSRTNSITYFDQRNQRSNSLSPKHSMLQSRLADSQSLDSSMYGKMGRSGSGFGMDHESWFLQKDPWDSQLILTEPHPDLFSTYEEYEYAMKNWAHEVITKTSILPPHPGQFIQLPKNSELSTDDGSGGGSGGSGVDGVGGNHQLGGSARHMLEMDFEMAKNQSNWTLRPIIRPIITEETMIFNRILSQSNLKHTEYDHLFSIDQELPPSQVWKTLDSDEKLKITETIDRWYRKKLTIQRQTSTWFRGGLWANHFLMPNIQSGWRESVSKKSSILPPLSLKALRRLDINSEADGKRVEHSFPIPELPINFNKLLAPDMNLQYFLGMLEMPTAHSLSSATGGQQQGGSGGGSGGSGSGSGSGSGLNMSGTSGSSGKSEKDKDKETANYIAMHSINNTTNVGTKEDRRQYTKILQTYEQRLQFSFRLDALNSWSEGGYTPMELQEKKLDIEQLVAAPGFDLQNGVWSLVNNSAHFLDKFQETFDQVDLRLYAPAIPMLPAIVPSVFINAGGGSGGGSGGASGGGISTSSGTSPNIVRPGSSSIGGGQPPSSPHIPSGSSLLSSPPNRQGSTGSFSFIGSPGGGGKISPTNSSSLESPRTQSQLAAVVERGSSPRSHSGGSISTHPNTPSVSSNTFLSLINTDSFPELLKFLDLTNEKLALGKISSLVLLVLTSELKGTMVIENILFSKDLQSLYRLARAISFFDAVPLDLFTYPTHLNEMLTPSIFKGSTQEVVRLVFVYYYLGIIQERLNFFSNNVGILGFVNSSRKDAAERIGIQFQNDREFLYKIFKALGRKSILVSNCFLFVLIQLIKMSESPTVQSLLKGELLTHIRDLSASKFSHSRFAAKRLYQILQEDPWKEFLMASYAESIKKNESQHLTDLTTMKEGPKLAIPSISLISELTFNFCVGVLENINSTPIPKPIYKFILNDSIFFQLCNAIVKCKNFTQSTQIVSKVFASLCKVLAKFNLFKNSDSIKSGGKVDPKKQNDVETGVAISPTLLFEIIGFLQNSSLDNNRYCSIIKTNMLIALRQLLKQSEIFDSIKKEGNLYNKFLIPACRDGKNVEFNRNVWRLFFQMIRFHHGHIEYLEKSKYLNALMDIISLNAGNVVLTNALHYLSKLFSLVSYETRKNALRAPGTLSIDTKYSEKDVKSLLNFFVERSCFIKFHMIYKKLTENTEGIQIDQRLLINITTFYRIISFLPSCQKLLKDTLKNPEYKTGIIQVSKMYKPSETF.

2 stretches are compositionally biased toward low complexity: residues 1–14 (MSSL…TPST) and 109–131 (LSPS…TTST). 2 disordered regions span residues 1-22 (MSSL…TFSK) and 108-147 (GLSP…QIKK). Residues 4–37 (LDPSLSTTPSTNRRGTFSKAKSFRRAALNLEPQG) form a TPR 1 repeat. Residues 166 to 199 (IYTSFPESMAFDDYMDYEESLVEWKRQVEQNLGI) form a TPR 2 repeat. The tract at residues 246–349 (IKETNSSVND…PSTGSLAGFV (104 aa)) is disordered. Polar residues-rich tracts occupy residues 249–267 (TNSS…PTLR), 288–310 (NKDN…NSGI), and 318–332 (SDTS…QLDG). Position 359 is a phosphoserine; by PKB (Ser-359). The segment at 400–600 (RSGSGFGMDH…QRQTSTWFRG (201 aa)) is gefA and gefH binding. Disordered stretches follow at residues 468–493 (PKNS…GVGG) and 686–734 (SLSS…DKDK). Composition is skewed to gly residues over residues 478-493 (GSGG…GVGG) and 694-714 (QQQG…GSGS). The segment covering 715–726 (GLNMSGTSGSSG) has biased composition (low complexity). A TPR 3 repeat occupies 742–777 (MHSINNTTNVGTKEDRRQYTKILQTYEQRLQFSFRL). Gly residues predominate over residues 864–875 (GGGSGGASGGGI). Residues 864–978 (GGGSGGASGG…GSISTHPNTP (115 aa)) are disordered. Low complexity predominate over residues 903-928 (HIPSGSSLLSSPPNRQGSTGSFSFIG). Residues 940–953 (NSSSLESPRTQSQL) show a composition bias toward polar residues. A compositionally biased stretch (low complexity) spans 960 to 972 (GSSPRSHSGGSIS). Positions 1000-1400 (FLDLTNEKLA…SIKKEGNLYN (401 aa)) are pppA and pho2B binding. Residues 1080–1113 (TQEVVRLVFVYYYLGIIQERLNFFSNNVGILGFV) form a TPR 4 repeat.

Component of the Sca1 complex composed of at least gefA, gefH, scaA, phr, and the protein phosphatase 2A subunits pppA and pho2B. In terms of processing, phosphorylated at Ser-359 by PKB and PKBR1 is induced by chemoattractant.

It localises to the cell membrane. Component of the Sca1 complex, a regulator of cell motility, chemotaxis and signal relay. The Sca1 complex is recruited to the plasma membrane in a chemoattractant- and F-actin-dependent manner and is enriched at the leading edge of chemotaxing cells where it regulates F-actin dynamics and signal relay by controlling the activation of rasC and the downstream target of rapamycin complex 2 (TORC2)-Akt/protein kinase B (PKB) pathway. ScaA acts as a molecular scaffold, bringing together gefA, gefH and phr with PP2A. This Dictyostelium discoideum (Social amoeba) protein is Sca1 complex scaffold protein scaA.